Reading from the N-terminus, the 256-residue chain is MNNIWWQTKGQGNVHLVLLHGWGLNAEVWRCIDEELSSHFTLHLVDLPGFGRSRGFGALSLADMAEAVLQQAPDKAIWLGWSLGGLVASQIALTHPERVQALVTVASSPCFSARDEWPGIKPDVLAGFQQQLSDDFQRTVERFLALQTMGTETARQDARALKKTVLALPMPEVDVLNGGLEILKTVDLRQPLQNVSMPFLRLYGYLDGLVPRKVVPMLDKLWPHSESYIFAKAAHAPFISHPVEFCHLLVALKQRV.

Residues 15–242 (HLVLLHGWGL…AAHAPFISHP (228 aa)) enclose the AB hydrolase-1 domain. Residues W22, 82-83 (SL), and 143-147 (FLALQ) each bind substrate. S82 serves as the catalytic Nucleophile. Residues D207 and H235 contribute to the active site. Residue H235 coordinates substrate.

It belongs to the AB hydrolase superfamily. Carboxylesterase BioH family. As to quaternary structure, monomer.

Its subcellular location is the cytoplasm. It catalyses the reaction 6-carboxyhexanoyl-[ACP] methyl ester + H2O = 6-carboxyhexanoyl-[ACP] + methanol + H(+). It participates in cofactor biosynthesis; biotin biosynthesis. The physiological role of BioH is to remove the methyl group introduced by BioC when the pimeloyl moiety is complete. It allows to synthesize pimeloyl-ACP via the fatty acid synthetic pathway through the hydrolysis of the ester bonds of pimeloyl-ACP esters. This Escherichia coli O8 (strain IAI1) protein is Pimeloyl-[acyl-carrier protein] methyl ester esterase.